Reading from the N-terminus, the 95-residue chain is Large ribosomal subunit protein uL23 (95 aa).

It belongs to the universal ribosomal protein uL23 family. In terms of assembly, part of the 50S ribosomal subunit. Contacts protein L29, and trigger factor when it is bound to the ribosome.

Functionally, one of the early assembly proteins it binds 23S rRNA. One of the proteins that surrounds the polypeptide exit tunnel on the outside of the ribosome. Forms the main docking site for trigger factor binding to the ribosome. The sequence is that of Large ribosomal subunit protein uL23 from Desulforapulum autotrophicum (strain ATCC 43914 / DSM 3382 / VKM B-1955 / HRM2) (Desulfobacterium autotrophicum).